The chain runs to 593 residues: MIDFLGGWKRTHYCGALTAGDIGKEVVLMGWAHRRRDHGGLIFVDLRDREGLAQVVFDPDNSPAAHKKAEAIRNEYVVAIRGKVIPRPDGTVNANLKTGEVEVLVSECKMLNRSKALPFTLDDYVDVAENLRLKHRYLDLRRPVLQENLILRSKVAQITRQYLTGNGFLELETPFLTKSTPEGARDFLVPSRINRGEFYALPQSPQLFKQILMVSGFDRYFQVVRCFRDEDLRADRQPEFTQIDCEMSFIDREDIITVMEGLIARIFTETKGATVNLPIPRMTYAESIRRFGVDNPDLRFGLELVELSDIVKNAGFKVFADVVAGGGIVKGLNAKGCGGMSRKEIDDLTEFAKIYGAKGLAYVKMTAEGWQSPIAKFFTAEEISAMDKAFDAKEGDLLLFVADKPKVVNDSLGKLRNHLAKSLGLLDKDTFNFVWITDFPLLEWDEEEKRWAAVHHPFTAPMDEDLEYVESDPGRCRAKAYDLVLNGNEIGGGSIRIHQEKIQSLMFKMLGHSEEDARTKFGFLLDAMDYGAPPHGGIAFGLDRLIMLLTGSDSIRDVIAFPKTQKGACLMSEAPSAVDMKQLRELGLKTVVK.

Glu182 provides a ligand contact to L-aspartate. Residues Gln206–Lys209 are aspartate. Arg228 contacts L-aspartate. Residues Arg228 to Glu230 and Gln237 each bind ATP. Position 455 (His455) interacts with L-aspartate. Glu489 is a binding site for ATP. L-aspartate is bound at residue Arg496. ATP is bound at residue Gly541–Arg544.

It belongs to the class-II aminoacyl-tRNA synthetase family. Type 1 subfamily. As to quaternary structure, homodimer.

Its subcellular location is the cytoplasm. It carries out the reaction tRNA(Asx) + L-aspartate + ATP = L-aspartyl-tRNA(Asx) + AMP + diphosphate. Aspartyl-tRNA synthetase with relaxed tRNA specificity since it is able to aspartylate not only its cognate tRNA(Asp) but also tRNA(Asn). Reaction proceeds in two steps: L-aspartate is first activated by ATP to form Asp-AMP and then transferred to the acceptor end of tRNA(Asp/Asn). This is Aspartate--tRNA(Asp/Asn) ligase from Geotalea uraniireducens (strain Rf4) (Geobacter uraniireducens).